The sequence spans 143 residues: Meiotically up-regulated gene 128 protein (143 aa).

Has a role in meiosis. The protein is Meiotically up-regulated gene 128 protein (mug128) of Schizosaccharomyces pombe (strain 972 / ATCC 24843) (Fission yeast).